The following is a 130-amino-acid chain: Single-stranded DNA-binding protein 1 (130 aa).

Positions 1-104 (MINNVVLIGR…VVAESFQILE (104 aa)) constitute an SSB domain. A disordered region spans residues 108 to 130 (NTANTSSLADSMPDYGPEPDLPF).

Homotetramer.

This Streptococcus pyogenes serotype M18 (strain MGAS8232) protein is Single-stranded DNA-binding protein 1 (ssb1).